A 775-amino-acid chain; its full sequence is Glutamine--tRNA ligase (775 aa).

At Ala-2 the chain carries N-acetylalanine. Residue Ser-70 is modified to Phosphoserine. ATP is bound by residues Glu-271–Asn-273 and His-277–Ala-283. Position 303 (Asp-303) interacts with L-glutamine. Lys-309 carries the N6-acetyllysine modification. Residue Tyr-438 coordinates L-glutamine. ATP contacts are provided by residues Thr-457, Arg-486–Leu-487, and Val-494–Lys-496. At Ser-495 the chain carries Phosphoserine.

Belongs to the class-I aminoacyl-tRNA synthetase family. Monomer. Part of a multisubunit complex that groups tRNA ligases for Arg (RARS1), Asp (DARS1), Gln (QARS1), Ile (IARS1), Leu (LARS1), Lys (KARS1), Met (MARS1) the bifunctional ligase for Glu and Pro (EPRS1) and the auxiliary subunits AIMP1/p43, AIMP2/p38 and EEF1E1/p18. Interacts with RARS1. Part of a complex composed of RARS1, QARS1 and AIMP1. As to expression, detected in dorsal root ganglia (at protein level). Detected in dorsal root ganglia.

The protein resides in the cytoplasm. Its subcellular location is the cytosol. It carries out the reaction tRNA(Gln) + L-glutamine + ATP = L-glutaminyl-tRNA(Gln) + AMP + diphosphate. Glutamine--tRNA ligase. Plays a critical role in brain development. The sequence is that of Glutamine--tRNA ligase (Qars1) from Rattus norvegicus (Rat).